Reading from the N-terminus, the 486-residue chain is Ribulose bisphosphate carboxylase large chain (486 aa).

The substrate site is built by asparagine 125 and threonine 175. Lysine 177 acts as the Proton acceptor in catalysis. Lysine 179 is a binding site for substrate. Residues lysine 203, aspartate 205, and glutamate 206 each contribute to the Mg(2+) site. Lysine 203 is modified (N6-carboxylysine). The Proton acceptor role is filled by histidine 295. Residues arginine 296, histidine 328, and serine 380 each coordinate substrate.

The protein belongs to the RuBisCO large chain family. Type I subfamily. As to quaternary structure, heterohexadecamer of 8 large chains and 8 small chains. Mg(2+) serves as cofactor.

The enzyme catalyses 2 (2R)-3-phosphoglycerate + 2 H(+) = D-ribulose 1,5-bisphosphate + CO2 + H2O. It carries out the reaction D-ribulose 1,5-bisphosphate + O2 = 2-phosphoglycolate + (2R)-3-phosphoglycerate + 2 H(+). Its function is as follows. RuBisCO catalyzes two reactions: the carboxylation of D-ribulose 1,5-bisphosphate, the primary event in carbon dioxide fixation, as well as the oxidative fragmentation of the pentose substrate. Both reactions occur simultaneously and in competition at the same active site. In Aurantimonas manganoxydans (strain ATCC BAA-1229 / DSM 21871 / SI85-9A1), this protein is Ribulose bisphosphate carboxylase large chain.